A 637-amino-acid chain; its full sequence is Nuclear receptor subfamily 2 group C member 1-B (637 aa).

The nuclear receptor DNA-binding region spans V149 to C224. 2 consecutive NR C4-type zinc fingers follow at residues C152–C172 and C188–C207. The NR LBD domain occupies C383 to E624.

It belongs to the nuclear hormone receptor family. NR2 subfamily.

It localises to the nucleus. Its function is as follows. Orphan nuclear receptor. Binds the IR7 element in the promoter of its own gene in an autoregulatory negative feedback mechanism. Primarily repressor of a broad range of genes. Binds to hormone response elements (HREs) consisting of two 5'-AGGTCA-3' half site direct repeat consensus sequences. This chain is Nuclear receptor subfamily 2 group C member 1-B (nr2c1-b), found in Xenopus laevis (African clawed frog).